The sequence spans 290 residues: MNLEEYFARTGYKGSLENQDLETLTDIFQHHIRAVPFENLSIHCGEKITLELEHVYNKIVHKKRGGWCMENNQLLGWVLKCLGYDTSFLGAYVFNPHENAYATIMTHLLVKVVIEGKAYIVDAGFGVSYQMWQPMELVSGKDQPQAPGIFRFTEKNAIWYLEKMRRKQYIPNQNFSNSDLLEKKDCRKVYMFSLEPRTVEDFCFQCTYLQTSPDSLFTKKSICTLQTTDGFRALIGWTLTETKYNYKENMDLVEFITLKDEEVEKTLKDKFNITLERKLVPINVKGFYTI.

Cys68 functions as the Acyl-thioester intermediate in the catalytic mechanism. Residues His107 and Asp122 contribute to the active site.

It belongs to the arylamine N-acetyltransferase family.

It catalyses the reaction an arylamine + acetyl-CoA = an N-acetylarylamine + CoA. In Gallus gallus (Chicken), this protein is Arylamine N-acetyltransferase, pineal gland isozyme NAT-10.